Here is a 239-residue protein sequence, read N- to C-terminus: Sugar fermentation stimulation protein homolog (239 aa).

Belongs to the SfsA family.

The polypeptide is Sugar fermentation stimulation protein homolog (Agrobacterium fabrum (strain C58 / ATCC 33970) (Agrobacterium tumefaciens (strain C58))).